A 172-amino-acid chain; its full sequence is MVDKRESYTKEDLLASGRGELFDAKGPQLPAPNMLMMDRVVKMTETGGNFDKGYVEAELDINPDLWFFGCHFIGDPVMPGCLGLDAMWQLVGFYLGWLGGEGKGRALGVGEVKFTGQVLPTAKKVTYRIHFKRIVNRRLIMGLADGEVLVDGRLIYTASDLKVGLFQDTSAF.

Residue H71 is part of the active site.

Belongs to the thioester dehydratase family. FabA subfamily. In terms of assembly, homodimer.

Its subcellular location is the cytoplasm. It catalyses the reaction a (3R)-hydroxyacyl-[ACP] = a (2E)-enoyl-[ACP] + H2O. It carries out the reaction (3R)-hydroxydecanoyl-[ACP] = (2E)-decenoyl-[ACP] + H2O. The catalysed reaction is (2E)-decenoyl-[ACP] = (3Z)-decenoyl-[ACP]. The protein operates within lipid metabolism; fatty acid biosynthesis. In terms of biological role, necessary for the introduction of cis unsaturation into fatty acids. Catalyzes the dehydration of (3R)-3-hydroxydecanoyl-ACP to E-(2)-decenoyl-ACP and then its isomerization to Z-(3)-decenoyl-ACP. Can catalyze the dehydratase reaction for beta-hydroxyacyl-ACPs with saturated chain lengths up to 16:0, being most active on intermediate chain length. This is 3-hydroxydecanoyl-[acyl-carrier-protein] dehydratase from Escherichia coli O6:K15:H31 (strain 536 / UPEC).